The following is an 823-amino-acid chain: MTKFSGNELRAELYRRAFLSYSVAPGALGMFGRSLLAKGARAEALANGTVMSGSHWGVFTATVENGRATAFTPWEKDPHPTPMLEGVLDSIYSPTRIKYPMVRREFLEKGVNADRSTRGNGDFVRVSWDQALDLVAAEVKRVEETYGPQGVFGGSYGWKSPGRLHNCTTLLRRMLTLAGGYVNGAGDYSTGAAQVIMPHVVGTLEVYEQQTAWPVLAENTEVMVFWAADPIKTSQIGWVIPEHGAYPGLEALKAKGTKVIVIDPVRTKTVEFFGADHVTPKPQTDVAIMLGMAHTLVAEDLYDKDFIANYTSGFDKFLPYLMGETDSTPKTAEWASDISGVPAETIKELARLFISKRTMLAAGWSMQRMHHGEQAHWMLVTLASMLGQIGLPGGGFGLSYHYSGGGTPSTSGPALSGITDGGAATKGPEWLAASGASVIPVARVVDMLENPGAEFDFNGTRSKFPDVKMAYWVGGNPFVHHQDRNRMVKAWEKLETFIVHDFQWTPTARHADIVLPATTSYERNDIETIGDYSNTGILAMKKIVEPLYEARSDYDIFAAVAERLGKGKEFTEGKDEMGWIKSFYDDAAKQGKAGGVEMPAFDAFWAEGIVEFPVTDGADFVRYASFREDPLLNPLGTPTGLIEIYSKNIEKMGYDDCPAHPTWMEPLERLDGPGAKYPLHIAASHPFNRLHSQLNGTVLREGYAVQGHEPCLMHPDDAAARGIADGDVVRVHNDRGQILTGVKVTDAVMKGVIQIYEGGWYDPSDVTEPGTLDKYGDVNVLSADIGTSKLAQGNCGQTVLAEVEKYTGPAVTLTGFVAPKAAE.

Positions 1–42 form a signal peptide, tat-type signal; it reads MTKFSGNELRAELYRRAFLSYSVAPGALGMFGRSLLAKGARA. Residues 156–160, Trp-158, Ser-189, 232–233, 262–263, 283–285, 364–365, Arg-368, Asn-476, His-480, 500–501, Arg-523, Asp-553, 685–686, 691–693, Asn-779, and 796–797 contribute to the Mo-bis(molybdopterin guanine dinucleotide) site; these read YGWKS, KT, ID, QTD, WS, HD, HP, HSQ, and GQ.

In terms of assembly, homodimer. Requires Mo-bis(molybdopterin guanine dinucleotide) as cofactor. In terms of processing, predicted to be exported by the Tat system. The position of the signal peptide cleavage has been experimentally proven.

It is found in the periplasm. It carries out the reaction dimethyl sulfide + a menaquinone + H2O = dimethyl sulfoxide + a menaquinol. The catalysed reaction is trimethylamine + 2 Fe(III)-[cytochrome c] + H2O = trimethylamine N-oxide + 2 Fe(II)-[cytochrome c] + 3 H(+). Catalyzes the reduction of dimethyl sulfoxide (DMSO) and trimethylamine N-oxide (TMAO) to dimethyl sulfide (DMS) and trimethylamine, respectively. The terminal DMSO reductase can also use various sulfoxides and N-oxide compounds as terminal electron acceptor in addition to DMSO and TMAO. This Rhodobacter capsulatus (Rhodopseudomonas capsulata) protein is Dimethyl sulfoxide/trimethylamine N-oxide reductase (dorA).